Reading from the N-terminus, the 594-residue chain is Alanine--tRNA ligase (594 aa).

Residues His-456, His-460, Cys-558, and His-562 each coordinate Zn(2+).

The protein belongs to the class-II aminoacyl-tRNA synthetase family. Zn(2+) serves as cofactor.

Its subcellular location is the cytoplasm. It catalyses the reaction tRNA(Ala) + L-alanine + ATP = L-alanyl-tRNA(Ala) + AMP + diphosphate. Functionally, catalyzes the attachment of alanine to tRNA(Ala) in a two-step reaction: alanine is first activated by ATP to form Ala-AMP and then transferred to the acceptor end of tRNA(Ala). Also edits incorrectly charged Ser-tRNA(Ala) and Gly-tRNA(Ala) via its editing domain. The sequence is that of Alanine--tRNA ligase (alaS) from Borreliella afzelii (strain PKo) (Borrelia afzelii).